The following is a 693-amino-acid chain: MTAIKKSFQYGQHTVTFETGEIARQASGAVLVNMADTVVLVTAVGLKDVAQGRDFFPLTVNYQERTYAAGRIPGGFFKREGRPTEKETLTSRLIDRPIRPLFPKGFMNEVQVIATVMSMNPEVDPDVPAMLGASAALALSGLPFKGPIGAARVGYLNGAYVLNPSMSELKHSDLDLVVAGTEKAVLMVESEAKLLSEEVMLGAVMYGHEQMQAAIKVINELAAEAGKPAWDWVAPEENVALKEAVAAACEAELTAAYQIAEKQARNQQVNALRDAVVAKLATGEEGAPSAEKVKGAFGALEKRIVRSRVLKGEPRIDGRDTRTVRPITVKTGVLPRTHGSALFTRGETQAIVVATLGTDRDAQLIEAIEGERRERFMLHYNFPPFCTGETGMVGSPKRREIGHGRLAKRGVQAVMPGEAECPYVLRVVSEITESNGSSSMASVCGTSLALMDAGVPLKAPVAGIAMGLIKEGDAFAVISDILGDEDHLGDMDFKVAGSKDGVSALQMDIKIDGITREIMEKALAQAKEGRLHILEKMNAVLSEPRTEVSAYAPRFTTLKIHPDKIRDVIGKGGATIRALTEETGTSIDISDDGTVKIASVDKAAGDEARRRIEELTADVEVGRIYEGRVVKIMDFGAFVTILPGRDGLVHISQISEERVESVSDRLTEGDLVKVKVLEVDKQGRIRLSMKEVG.

2 residues coordinate Mg(2+): D486 and D492. The KH domain maps to 553 to 612; that stretch reads PRFTTLKIHPDKIRDVIGKGGATIRALTEETGTSIDISDDGTVKIASVDKAAGDEARRRI. The region spanning 622 to 690 is the S1 motif domain; the sequence is GRIYEGRVVK…KQGRIRLSMK (69 aa).

It belongs to the polyribonucleotide nucleotidyltransferase family. As to quaternary structure, component of the RNA degradosome, which is a multiprotein complex involved in RNA processing and mRNA degradation. Mg(2+) is required as a cofactor.

It localises to the cytoplasm. The catalysed reaction is RNA(n+1) + phosphate = RNA(n) + a ribonucleoside 5'-diphosphate. Its function is as follows. Involved in mRNA degradation. Catalyzes the phosphorolysis of single-stranded polyribonucleotides processively in the 3'- to 5'-direction. The protein is Polyribonucleotide nucleotidyltransferase of Thioalkalivibrio sulfidiphilus (strain HL-EbGR7).